A 396-amino-acid chain; its full sequence is NADH-quinone oxidoreductase subunit D (396 aa).

It belongs to the complex I 49 kDa subunit family. NDH-1 is composed of 14 different subunits. Subunits NuoB, C, D, E, F, and G constitute the peripheral sector of the complex.

It is found in the cell inner membrane. It catalyses the reaction a quinone + NADH + 5 H(+)(in) = a quinol + NAD(+) + 4 H(+)(out). In terms of biological role, NDH-1 shuttles electrons from NADH, via FMN and iron-sulfur (Fe-S) centers, to quinones in the respiratory chain. The immediate electron acceptor for the enzyme in this species is believed to be ubiquinone. Couples the redox reaction to proton translocation (for every two electrons transferred, four hydrogen ions are translocated across the cytoplasmic membrane), and thus conserves the redox energy in a proton gradient. This Rhizobium johnstonii (strain DSM 114642 / LMG 32736 / 3841) (Rhizobium leguminosarum bv. viciae) protein is NADH-quinone oxidoreductase subunit D.